A 1400-amino-acid polypeptide reads, in one-letter code: DNA-directed RNA polymerase subunit beta' (1400 aa).

Zn(2+) contacts are provided by cysteine 71, cysteine 73, cysteine 86, and cysteine 89. Residues aspartate 462, aspartate 464, and aspartate 466 each contribute to the Mg(2+) site. Zn(2+)-binding residues include cysteine 811, cysteine 885, cysteine 892, and cysteine 895.

It belongs to the RNA polymerase beta' chain family. As to quaternary structure, the RNAP catalytic core consists of 2 alpha, 1 beta, 1 beta' and 1 omega subunit. When a sigma factor is associated with the core the holoenzyme is formed, which can initiate transcription. The cofactor is Mg(2+). Zn(2+) is required as a cofactor.

The enzyme catalyses RNA(n) + a ribonucleoside 5'-triphosphate = RNA(n+1) + diphosphate. Its function is as follows. DNA-dependent RNA polymerase catalyzes the transcription of DNA into RNA using the four ribonucleoside triphosphates as substrates. The polypeptide is DNA-directed RNA polymerase subunit beta' (Brucella suis biovar 1 (strain 1330)).